A 290-amino-acid chain; its full sequence is 33 kDa chaperonin (290 aa).

Cystine bridges form between Cys-235–Cys-237 and Cys-268–Cys-271.

This sequence belongs to the HSP33 family. In terms of processing, under oxidizing conditions two disulfide bonds are formed involving the reactive cysteines. Under reducing conditions zinc is bound to the reactive cysteines and the protein is inactive.

It is found in the cytoplasm. Its function is as follows. Redox regulated molecular chaperone. Protects both thermally unfolding and oxidatively damaged proteins from irreversible aggregation. Plays an important role in the bacterial defense system toward oxidative stress. The polypeptide is 33 kDa chaperonin (Streptococcus uberis (strain ATCC BAA-854 / 0140J)).